Here is a 177-residue protein sequence, read N- to C-terminus: Large ribosomal subunit protein uL6 (177 aa).

It belongs to the universal ribosomal protein uL6 family. Part of the 50S ribosomal subunit.

Its function is as follows. This protein binds to the 23S rRNA, and is important in its secondary structure. It is located near the subunit interface in the base of the L7/L12 stalk, and near the tRNA binding site of the peptidyltransferase center. The polypeptide is Large ribosomal subunit protein uL6 (Azoarcus sp. (strain BH72)).